Here is a 143-residue protein sequence, read N- to C-terminus: Large ribosomal subunit protein uL11 (143 aa).

The protein belongs to the universal ribosomal protein uL11 family. In terms of assembly, part of the ribosomal stalk of the 50S ribosomal subunit. Interacts with L10 and the large rRNA to form the base of the stalk. L10 forms an elongated spine to which L12 dimers bind in a sequential fashion forming a multimeric L10(L12)X complex. One or more lysine residues are methylated.

Functionally, forms part of the ribosomal stalk which helps the ribosome interact with GTP-bound translation factors. This is Large ribosomal subunit protein uL11 from Ectopseudomonas mendocina (strain ymp) (Pseudomonas mendocina).